The primary structure comprises 610 residues: Serine/threonine-protein kinase RCK2 (610 aa).

Disordered regions lie at residues 1 to 55 (MLKI…QDKN) and 99 to 127 (TSVP…SLSE). Residues 11 to 24 (KKPDQADLSQESKK) show a composition bias toward basic and acidic residues. The span at 31-55 (RSSGTNNKDVSQITSSPKKSFQDKN) shows a compositional bias: polar residues. Phosphoserine is present on residues serine 46 and serine 50. Residues 163-478 (YKLINKIGEG…IDQFLDDPWL (316 aa)) form the Protein kinase domain. ATP is bound at residue 169 to 177 (IGEGAFSKV). Serine 187 is subject to Phosphoserine. Residue lysine 201 participates in ATP binding. Residue aspartate 313 is the Proton acceptor of the active site. Position 350 is a phosphothreonine (threonine 350). Residues 493–506 (KKAGTSERRHPHKK) are calmodulin-binding. The residue at position 520 (serine 520) is a Phosphoserine. Positions 541–564 (EDRMGTRGGLGSLAEDEELEDSYS) are disordered.

Belongs to the protein kinase superfamily. CAMK Ser/Thr protein kinase family. CaMK subfamily. In terms of processing, autophosphorylated. Phosphorylated by HOG1 at Ser-520 after osmotic stress.

It is found in the cytoplasm. The enzyme catalyses L-seryl-[protein] + ATP = O-phospho-L-seryl-[protein] + ADP + H(+). It carries out the reaction L-threonyl-[protein] + ATP = O-phospho-L-threonyl-[protein] + ADP + H(+). With respect to regulation, activated by Ser-520 phosphorylation by HOG1. Its function is as follows. Serine/threonine-protein kinase involved in a signal transduction pathway that is activated by changes in the osmolarity of the extracellular environment. This chain is Serine/threonine-protein kinase RCK2 (RCK2), found in Saccharomyces cerevisiae (strain ATCC 204508 / S288c) (Baker's yeast).